We begin with the raw amino-acid sequence, 1039 residues long: Pleckstrin homology domain-containing family G member 5 (1039 aa).

Disordered regions lie at residues 58–105 and 185–277; these read NVST…RRHT and PGDE…SSES. Basic and acidic residues-rich tracts occupy residues 185 to 199 and 217 to 228; these read PGDE…KDSK and ERVDPQSRRESS. A compositionally biased stretch (low complexity) spans 259-277; sequence SSCSLPVGSSVGSSGSSES. Residues 372-564 form the DH domain; it reads HQQEAVWELL…ERFIHHVNTC (193 aa). Positions 620–720 constitute a PH domain; sequence QLLLEGSLRM…WVDTLYNAQN (101 aa). 2 disordered regions span residues 739-785 and 800-836; these read QHLQ…ASDG and TLSS…LLPL. Positions 744–757 are enriched in acidic residues; the sequence is LEEEEDEQEEEGEE. Polar residues-rich tracts occupy residues 758 to 776 and 811 to 831; these read SGTS…SNSL and FSSQ…TPTS. Thr760 carries the phosphothreonine modification. Ser765 is subject to Phosphoserine. Position 876 is a phosphothreonine (Thr876). Phosphoserine is present on residues Ser878, Ser903, and Ser908. The interval 967–989 is disordered; the sequence is PLSESENRPSHKAGGPADSARRK.

As to quaternary structure, interacts with GIPC1/synectin and RHOA. Selectively expressed in cortical and hippocampal neurons with prominent expression in the cell bodies and dendrites. Weakly expressed in rat fad pad ECs (RFPECs).

It is found in the cytoplasm. It localises to the perinuclear region. Its subcellular location is the cell membrane. The protein localises to the cell junction. The protein resides in the cell projection. It is found in the lamellipodium. Functionally, functions as a guanine exchange factor (GEF) for RAB26 and thus regulates autophagy of synaptic vesicles in axon terminal of motoneurons. Involved in the control of neuronal cell differentiation. Plays a role in angiogenesis through regulation of endothelial cells chemotaxis. Also affects the migration, adhesion, and matrix/bone degradation in macrophages and osteoclasts. This is Pleckstrin homology domain-containing family G member 5 (Plekhg5) from Rattus norvegicus (Rat).